The sequence spans 515 residues: Cytochrome P450 705A22 (515 aa).

A helical transmembrane segment spans residues 9–29; that stretch reads FQNCFIFILIFLLTFLCFFFF. Cys-454 is a heme binding site.

The protein belongs to the cytochrome P450 family. The cofactor is heme.

It localises to the membrane. Its function is as follows. Plays a role in the gravitropic response of the inflorescence stems and roots. May affect the synthesis of flavonols that have a role in regulating auxin transport. The polypeptide is Cytochrome P450 705A22 (Arabidopsis thaliana (Mouse-ear cress)).